Here is a 432-residue protein sequence, read N- to C-terminus: Trigger factor (432 aa).

The 86-residue stretch at 161-246 folds into the PPIase FKBP-type domain; it reads EDRVTIDFTG…LKKVEERELP (86 aa).

Belongs to the FKBP-type PPIase family. Tig subfamily.

The protein localises to the cytoplasm. It carries out the reaction [protein]-peptidylproline (omega=180) = [protein]-peptidylproline (omega=0). In terms of biological role, involved in protein export. Acts as a chaperone by maintaining the newly synthesized protein in an open conformation. Functions as a peptidyl-prolyl cis-trans isomerase. This Cronobacter sakazakii (strain ATCC BAA-894) (Enterobacter sakazakii) protein is Trigger factor.